We begin with the raw amino-acid sequence, 572 residues long: Proline--tRNA ligase (572 aa).

Belongs to the class-II aminoacyl-tRNA synthetase family. ProS type 1 subfamily. Homodimer.

It localises to the cytoplasm. It catalyses the reaction tRNA(Pro) + L-proline + ATP = L-prolyl-tRNA(Pro) + AMP + diphosphate. Its function is as follows. Catalyzes the attachment of proline to tRNA(Pro) in a two-step reaction: proline is first activated by ATP to form Pro-AMP and then transferred to the acceptor end of tRNA(Pro). As ProRS can inadvertently accommodate and process non-cognate amino acids such as alanine and cysteine, to avoid such errors it has two additional distinct editing activities against alanine. One activity is designated as 'pretransfer' editing and involves the tRNA(Pro)-independent hydrolysis of activated Ala-AMP. The other activity is designated 'posttransfer' editing and involves deacylation of mischarged Ala-tRNA(Pro). The misacylated Cys-tRNA(Pro) is not edited by ProRS. The sequence is that of Proline--tRNA ligase from Bacillus licheniformis (strain ATCC 14580 / DSM 13 / JCM 2505 / CCUG 7422 / NBRC 12200 / NCIMB 9375 / NCTC 10341 / NRRL NRS-1264 / Gibson 46).